We begin with the raw amino-acid sequence, 1099 residues long: Inverted formin-2 (1099 aa).

A GBD/FH3 domain is found at 1–330; it reads MSLTEGAHTK…RAVLLADDCQ (330 aa). Composition is skewed to basic and acidic residues over residues 348 to 359 and 367 to 385; these read SSKEKRKTDKCT and QTDK…KKDP. Disordered stretches follow at residues 348–391, 432–509, and 1000–1019; these read SSKE…SGIP, PSPP…PTPP, and AEKR…KGEN. The 144-residue stretch at 426–569 folds into the FH1 domain; sequence TCSSVLPSPP…GMLPPPPPLP (144 aa). Residues 452 to 499 show a composition bias toward pro residues; sequence PLPPPPPPLPGTELSPPPPGMVALSLPPPPPPLPGMGGMLPPPPPPLP. In terms of domain architecture, FH2 spans 621-1009; it reads FLKVNKPTLK…AEKRKQQIAD (389 aa). A coiled-coil region spans residues 907-1019; sequence LKKLRDLQNK…EETKRQKGEN (113 aa). In terms of domain architecture, WH2 spans 1037 to 1052; sequence DDLLADIKKGFQLRKT. The disordered stretch occupies residues 1064–1085; sequence KTLSSETNRTDIQHVGKRPEVP. Positions 1071-1083 are enriched in basic and acidic residues; sequence NRTDIQHVGKRPE.

This sequence belongs to the formin homology family.

This Xenopus laevis (African clawed frog) protein is Inverted formin-2 (inf2).